The primary structure comprises 772 residues: MIRDLSKMYPQTRHPAPPHQPAQPFKFTISESCDRIKEEFQFLQAQYHSLKLECEKLASEKTEMQRHYVMYYEMSYGLNIEMHKQAEIVKRLNAICAQVIPFLSQEHQQQVVQAVERAKQVTMAELNAIIGQQLQAQHLSHAHGLPVPLTPHPSGLQPPAIPSIGSSAGLLALSSALGGQSHLPIKDEKKHHDSDHQRDRDSIKSSSVSPSASFRAAEKHRNSTDYSSESKKQKTEEKDIAARYDSDGEKSDDNLVVDVSNEDPSSPRGSPAHSPRENGLDKPRLLKKDAPISPASIASSSSTPSSKSKEHSHNEKSTTPVSKSNTPTPRTDAPTPGSNSSGLRPVPGKPPGVDPLTGLRTPMAVPCPYPTPFGIVPHAGMNGDLTSPGPAYASLHSISPQMSAAAAAAAAAAAYGRSPVVGFDPHHHMRVPGIPPNLTGIPGGKPAYSFHVSADGQMQPVPFPPDALIGPGIPRHARQINTLNHGEVVCAVTISNPTRHVYTGGKGCVKVWDISHPGNKSPVSQLDCLNRDNYIRSCRLLPDGRTLIVGGEASTLSIWDLAAPTPRIKAELTSSAPACYALAISPDSKVCFSCCSDGNIAVWDLHNQTLVRQFQGHTDGASCIDISNDGTKLWTGGLDNTVRSWDLREGRQLQQHDFTSQIFSLGYCPTGEWLAVGMENSNVEVLHVTKPDKYQLHLHESCVLSLKFAHCGKWFVSTGKDNLLNAWRTPYGASIFQSKESSSVLSCDISVDDKYIVTGSGDKKATVYEVIY.

Disordered stretches follow at residues 1-24 and 183-359; these read MIRD…PAQP and LPIK…LTGL. The tract at residues 1–137 is q domain; that stretch reads MIRDLSKMYP…AIIGQQLQAQ (137 aa). Positions 138–205 are GP domain; the sequence is HLSHAHGLPV…HQRDRDSIKS (68 aa). The segment covering 184-203 has biased composition (basic and acidic residues); it reads PIKDEKKHHDSDHQRDRDSI. Residues 204–213 are compositionally biased toward low complexity; sequence KSSSVSPSAS. Residues 206–275 are ccN domain; the sequence is SSVSPSASFR…SPRGSPAHSP (70 aa). 2 stretches are compositionally biased toward basic and acidic residues: residues 216-253 and 274-290; these read AAEK…KSDD and SPRE…KKDA. The interval 276 to 452 is SP domain; the sequence is RENGLDKPRL…GGKPAYSFHV (177 aa). A compositionally biased stretch (low complexity) spans 291–306; it reads PISPASIASSSSTPSS. The segment covering 307 to 316 has biased composition (basic and acidic residues); the sequence is KSKEHSHNEK. Polar residues predominate over residues 318–329; that stretch reads TTPVSKSNTPTP. WD repeat units lie at residues 484-522, 530-569, 574-613, 616-655, 657-696, 698-737, and 739-772; these read NHGE…NKSP, NRDN…PRIK, SSAP…LVRQ, GHTD…QLQQ, DFTS…KYQL, LHES…SIFQ, and KESS…EVIY.

This sequence belongs to the WD repeat Groucho/TLE family. In terms of assembly, interacts with tcf7, tcf7l1, ripply2.2/bowline, dscr6/ripply3 and foxd3. Associates with tbx6 in the presence of ripply2.2/bowline. Interacts with EFNB1 through the SP domain. In terms of processing, ubiquitinated by XIAP/BIRC4. Expressed at high levels in the spleen and ovary.

Its subcellular location is the nucleus. Functionally, transcriptional corepressor. Functions with ripply2.2/bowline to down regulate transcription of tbx6-dependent gene expression. Represses transcription of siamois and nodal3. In Xenopus laevis (African clawed frog), this protein is Transducin-like enhancer protein 4 (tle4).